The primary structure comprises 145 residues: Large ribosomal subunit protein uL11 (145 aa).

This sequence belongs to the universal ribosomal protein uL11 family. In terms of assembly, part of the ribosomal stalk of the 50S ribosomal subunit. Interacts with L10 and the large rRNA to form the base of the stalk. L10 forms an elongated spine to which L12 dimers bind in a sequential fashion forming a multimeric L10(L12)X complex. Post-translationally, one or more lysine residues are methylated.

Forms part of the ribosomal stalk which helps the ribosome interact with GTP-bound translation factors. The sequence is that of Large ribosomal subunit protein uL11 from Aquifex aeolicus (strain VF5).